Reading from the N-terminus, the 520-residue chain is Chaperone Ric-8B (520 aa).

Ser-468 carries the phosphoserine modification. The residue at position 473 (Thr-473) is a Phosphothreonine.

This sequence belongs to the synembryn family. Interacts with GDP-bound G(s) G-alpha proteins GNAL and GNAS. Does not interact with G-alpha proteins when they are in complex with subunits beta and gamma. As to expression, predominantly expressed in the mature olfactory sensory neurons and also in a few regions in the brain.

It is found in the cytoplasm. It localises to the cell cortex. Functionally, chaperone that specifically binds and folds nascent G(s) G-alpha proteins (GNAS and GNAL) prior to G protein heterotrimer formation, promoting their association with the plasma membrane. Also acts as a guanine nucleotide exchange factor (GEF) for G(s) proteins by stimulating exchange of bound GDP for free GTP. Acts as an important component for odorant signal transduction by mediating GNAL (G(olf)-alpha) folding, thereby promoting-dependent cAMP accumulation in olfactory sensory neurons. The protein is Chaperone Ric-8B of Mus musculus (Mouse).